Consider the following 89-residue polypeptide: Small ribosomal subunit protein uS15 (89 aa).

This sequence belongs to the universal ribosomal protein uS15 family. In terms of assembly, part of the 30S ribosomal subunit. Forms a bridge to the 50S subunit in the 70S ribosome, contacting the 23S rRNA.

In terms of biological role, one of the primary rRNA binding proteins, it binds directly to 16S rRNA where it helps nucleate assembly of the platform of the 30S subunit by binding and bridging several RNA helices of the 16S rRNA. Forms an intersubunit bridge (bridge B4) with the 23S rRNA of the 50S subunit in the ribosome. The chain is Small ribosomal subunit protein uS15 from Mycolicibacterium vanbaalenii (strain DSM 7251 / JCM 13017 / BCRC 16820 / KCTC 9966 / NRRL B-24157 / PYR-1) (Mycobacterium vanbaalenii).